A 546-amino-acid chain; its full sequence is CCA tRNA nucleotidyltransferase, mitochondrial (546 aa).

It belongs to the tRNA nucleotidyltransferase/poly(A) polymerase family.

The protein resides in the mitochondrion. It is found in the cytoplasm. It localises to the nucleus. It catalyses the reaction a tRNA precursor + 2 CTP + ATP = a tRNA with a 3' CCA end + 3 diphosphate. Its function is as follows. Nucleotidyltransferase that catalyzes the addition and repair of the essential 3'-terminal CCA sequence in tRNAs, which is necessary for the attachment of amino acids to the 3' terminus of tRNA molecules, using CTP and ATP as substrates. tRNA 3'-terminal CCA addition is required both for tRNA processing and repair. Also involved in tRNA surveillance by mediating tandem CCA addition to generate a CCACCA at the 3' terminus of unstable tRNAs. While stable tRNAs receive only 3'-terminal CCA, unstable tRNAs are marked with CCACCA and rapidly degraded. The structural flexibility of RNA controls the choice between CCA versus CCACCA addition: following the first CCA addition cycle, nucleotide-binding to the active site triggers a clockwise screw motion, producing torque on the RNA. This ejects stable RNAs, whereas unstable RNAs are refolded while bound to the enzyme and subjected to a second CCA catalytic cycle. This is CCA tRNA nucleotidyltransferase, mitochondrial (CCA1) from Saccharomyces cerevisiae (strain ATCC 204508 / S288c) (Baker's yeast).